The primary structure comprises 512 residues: Opioid growth factor receptor-like protein 1 (512 aa).

Disordered regions lie at residues 1 to 72 (MGNI…ETGT), 323 to 469 (IWGP…TCCK), and 488 to 512 (SLSPGTSNSNVTELKVEGSETGPFT). 2 stretches are compositionally biased toward acidic residues: residues 28-54 (GGEEEQQEAEEEEESEGTEQREDDNEE) and 62-71 (TNEGGEEETG). Basic and acidic residues predominate over residues 328 to 337 (DKQKADENKA). A compositionally biased stretch (basic residues) spans 347–361 (QKKHSHVEKKSRPAK). Positions 408–421 (TVTSENNSSKTGQT) are enriched in polar residues. Residues 449–468 (RSLDTEHDLKRPEADRETCC) show a composition bias toward basic and acidic residues. The span at 490–499 (SPGTSNSNVT) shows a compositional bias: polar residues.

The protein belongs to the opioid growth factor receptor family.

In Xenopus tropicalis (Western clawed frog), this protein is Opioid growth factor receptor-like protein 1 (ogfrl1).